We begin with the raw amino-acid sequence, 541 residues long: Transcription factor STP2 (541 aa).

The tract at residues 13-32 (VLTRIYDYLKALVQQVIVPN) is i. The tract at residues 35–58 (DDKSSKSTPFEKLEPAKQNHPQKD) is disordered. The II stretch occupies residues 73 to 105 (LFPKQNNKQLSLTSKSSVVPCALNLDNLETPFS). A C2H2-type 1 zinc finger spans residues 204 to 226 (YICHYCDARFRIRGYLTRHIKKH). A C2H2-type 2; atypical zinc finger spans residues 232–267 (YHCPFFDNSISQELRCHTSGGFSRRDTYKTHLKSRH). The C2H2-type 3; atypical zinc-finger motif lies at 284–309 (GVCTQCGEHFSTSESWVENHIEAGSC). Residues 452–462 (SSASSALSPLS) show a composition bias toward low complexity. The tract at residues 452–497 (SSASSALSPLSGDPITTTETNKSYPLDSEQSLLEPDKTEEDAINQS) is disordered. Over residues 465-482 (PITTTETNKSYPLDSEQS) the composition is skewed to polar residues.

As to quaternary structure, interacts (via Region II) with SSY5; protease component of the SPS-sensor. Activated by the amino acid-induced proteolytic removal of an N-terminal inhibitory domain by serine protease SSY5, an intrinsic component of the SPS-sensor. Processing requires at least 2 components of the SCF(GRR1) ubiquitin ligase complex, namely the F-box protein GRR1 and the E2 enzyme CDC34, but does not depend on the proteasome. Processing is negatively regulated by the protein phosphatase 2A regulatory subunit RTS1.

The protein resides in the cell membrane. It localises to the nucleus. Functionally, transcription factor involved in the regulation of gene expression in response to extracellular amino acid levels. Synthesized as latent cytoplasmic precursor, which, upon a signal initiated by the plasma membrane SPS (SSY1-PTR3-SSY5) amino acid sensor system, becomes proteolytically activated and relocates to the nucleus, where it induces the expression of SPS-sensor-regulated genes, including the amino-acid permeases BAP2 and BAP3. Binding to promoters is facilitated by DAL81. Involved in the repression of genes subject to nitrogen catabolite repression and genes involved in stress response. Negatively regulated by inner nuclear membrane proteins ASI1, ASI2 and ASI3, which prevent unprocessed precursor forms that escape cytoplasmic anchoring from inducing SPS-sensor-regulated genes. This is Transcription factor STP2 (STP2) from Saccharomyces cerevisiae (strain ATCC 204508 / S288c) (Baker's yeast).